The sequence spans 476 residues: MEPLAILALLSLPICSAYPLHGAVTQGHPSMDLAQQYLEKYYNFKKNEKQIFKRKDSSPVVKKIQEMQKFLGLEMTGKLDSNTMELMHKPRCGVPDVGGFSTFPGSPKWRKSHITYRIVNYTPDLPRQSVDSAIEKALKVWEEVTPLTFSRISEGEADIMISFAVGEHGDFYPFDGPGQSLAHAYPPGPGFYGDVHFDDDEKWTLAPSGTNLFLVAAHELGHSLGLFHSDKKESLMYPVYRFSTSPANFHLSQDDIEGIQSLYGAGPSSDATVVPVLSVSPRPETPDKCDPALSFDSVSTLRGEVLFFKDRYFWRRSHWNPEPEFHLISAFWPTLPSDLDAAYEAHNTDSVLIFKGSQFWAVRGNEVQAGYPKGIHTLGFPPTVKKIDAAVFEKEKKKTYFFVGDKYWRFDETRHVMDKGFPRQITDDFPGIEPQVDAVLHEFGFFYFFRGSSQFEFDPNARTVTHILKSNSWLLC.

A signal peptide spans 1–17 (MEPLAILALLSLPICSA). Positions 18–99 (YPLHGAVTQG…PRCGVPDVGG (82 aa)) are cleaved as a propeptide — activation peptide. Residues 90-97 (PRCGVPDV) carry the Cysteine switch motif. Residues cysteine 92, histidine 168, aspartate 170, histidine 183, histidine 196, and histidine 218 each contribute to the Zn(2+) site. Glutamate 219 is an active-site residue. Zn(2+) is bound by residues histidine 222 and histidine 228. 4 Hemopexin repeats span residues 286–335 (PDKC…WPTL), 336–382 (PSDL…GFPP), 384–432 (VKKI…FPGI), and 433–476 (EPQV…WLLC). Cysteines 289 and 476 form a disulfide.

This sequence belongs to the peptidase M10A family. Requires Zn(2+) as cofactor. Ca(2+) is required as a cofactor. In terms of tissue distribution, expressed in small intestine. Weak levels in heart and lung.

Its subcellular location is the secreted. The protein localises to the extracellular space. It localises to the extracellular matrix. It carries out the reaction Similar to stromelysin 1, but action on collagen types III, IV and V is weak.. Can degrade fibronectin, gelatins of type I, III, IV, and V; weakly collagens III, IV, and V. Activates procollagenase. The protein is Stromelysin-2 (Mmp10) of Mus musculus (Mouse).